A 384-amino-acid chain; its full sequence is Secreted LysM effector LysM14 (384 aa).

Positions 1–35 are cleaved as a signal peptide; that stretch reads MGWSPRWKVMLRGIFNAMISIHILLSLLFAHIATA. The region spanning 64-112 is the LysM domain; the sequence is YTYTIQEGDTCAKLAQRYQVTTSNIETWNVGSWGWPGCAKIKQGDFVCL. The interval 185-220 is disordered; the sequence is STTKSAASKTTTTSNPTTTSKTTITSKPTTTSKPTT.

This sequence belongs to the secreted LysM effector family.

Its subcellular location is the secreted. Functionally, secreted LysM effector that might have a role in sequestration of chitin oligosaccharides (breakdown products of fungal cell walls that are released during invasion and act as triggers of host immunity) to dampen host defense. This is Secreted LysM effector LysM14 from Penicillium expansum (Blue mold rot fungus).